A 333-amino-acid polypeptide reads, in one-letter code: Homeobox protein Hox-A1 (333 aa).

The interval isoleucine 61–serine 82 is disordered. Residues proline 64–proline 74 show a composition bias toward basic residues. Residues proline 74 to glutamine 202 form an interaction with OGT region. Threonine 152 carries O-linked (GlcNAc) threonine glycosylation. An Antp-type hexapeptide motif is present at residues threonine 203–lysine 208. A DNA-binding region (homeobox) is located at residues glutamine 227–glutamate 286. The disordered stretch occupies residues arginine 279 to histidine 333. A compositionally biased stretch (basic and acidic residues) spans serine 301–glutamate 310. A compositionally biased stretch (low complexity) spans lysine 311–histidine 333.

This sequence belongs to the Antp homeobox family. Labial subfamily. Interacts with OGT (via TPR repeats domain); the interaction takes place mainly in the nucleus. Forms a DNA-binding heterodimer with transcription factor PBX1. Post-translationally, glycosylated by OGT.

It localises to the nucleus. Its function is as follows. Sequence-specific transcription factor. Regulates multiple developmental processes including brainstem, inner and outer ear, abducens nerve and cardiovascular development and morphogenesis as well as cognition and behavior. Also part of a developmental regulatory system that provides cells with specific positional identities on the anterior-posterior axis. Acts on the anterior body structures. Seems to act in the maintenance and/or generation of hindbrain segments. Activates transcription in the presence of PBX1A and PKNOX1. The chain is Homeobox protein Hox-A1 (Hoxa1) from Rattus norvegicus (Rat).